The primary structure comprises 244 residues: Coenzyme Q-binding protein COQ10 homolog B, mitochondrial (244 aa).

It belongs to the COQ10 family. As to quaternary structure, interacts with coenzyme Q.

Its subcellular location is the mitochondrion inner membrane. Functionally, required for the function of coenzyme Q in the respiratory chain. May serve as a chaperone or may be involved in the transport of Q6 from its site of synthesis to the catalytic sites of the respiratory complexes. The polypeptide is Coenzyme Q-binding protein COQ10 homolog B, mitochondrial (coq10b) (Xenopus laevis (African clawed frog)).